A 130-amino-acid chain; its full sequence is ATP synthase epsilon chain, chloroplastic (130 aa).

Belongs to the ATPase epsilon chain family. F-type ATPases have 2 components, CF(1) - the catalytic core - and CF(0) - the membrane proton channel. CF(1) has five subunits: alpha(3), beta(3), gamma(1), delta(1), epsilon(1). CF(0) has three main subunits: a, b and c.

It localises to the plastid. It is found in the chloroplast thylakoid membrane. Functionally, produces ATP from ADP in the presence of a proton gradient across the membrane. The sequence is that of ATP synthase epsilon chain, chloroplastic from Emiliania huxleyi (Coccolithophore).